Here is a 464-residue protein sequence, read N- to C-terminus: 3-isopropylmalate dehydratase large subunit (464 aa).

[4Fe-4S] cluster contacts are provided by Cys337, Cys397, and Cys400.

This sequence belongs to the aconitase/IPM isomerase family. LeuC type 1 subfamily. In terms of assembly, heterodimer of LeuC and LeuD. [4Fe-4S] cluster is required as a cofactor.

The enzyme catalyses (2R,3S)-3-isopropylmalate = (2S)-2-isopropylmalate. Its pathway is amino-acid biosynthesis; L-leucine biosynthesis; L-leucine from 3-methyl-2-oxobutanoate: step 2/4. In terms of biological role, catalyzes the isomerization between 2-isopropylmalate and 3-isopropylmalate, via the formation of 2-isopropylmaleate. This Bacillus mycoides (strain KBAB4) (Bacillus weihenstephanensis) protein is 3-isopropylmalate dehydratase large subunit.